The sequence spans 572 residues: Adenine deaminase (572 aa).

Belongs to the metallo-dependent hydrolases superfamily. Adenine deaminase family. Mn(2+) is required as a cofactor.

It carries out the reaction adenine + H2O + H(+) = hypoxanthine + NH4(+). In Clostridium perfringens (strain 13 / Type A), this protein is Adenine deaminase.